The sequence spans 338 residues: RNA 3'-terminal phosphate cyclase (338 aa).

ATP is bound by residues Gln103 and 283–287; that span reads YLADQ. Residue His308 is the Tele-AMP-histidine intermediate of the active site.

It belongs to the RNA 3'-terminal cyclase family. Type 1 subfamily.

It is found in the cytoplasm. The enzyme catalyses a 3'-end 3'-phospho-ribonucleotide-RNA + ATP = a 3'-end 2',3'-cyclophospho-ribonucleotide-RNA + AMP + diphosphate. Functionally, catalyzes the conversion of 3'-phosphate to a 2',3'-cyclic phosphodiester at the end of RNA. The mechanism of action of the enzyme occurs in 3 steps: (A) adenylation of the enzyme by ATP; (B) transfer of adenylate to an RNA-N3'P to produce RNA-N3'PP5'A; (C) and attack of the adjacent 2'-hydroxyl on the 3'-phosphorus in the diester linkage to produce the cyclic end product. The biological role of this enzyme is unknown but it is likely to function in some aspects of cellular RNA processing. The protein is RNA 3'-terminal phosphate cyclase of Escherichia coli (strain K12 / MC4100 / BW2952).